We begin with the raw amino-acid sequence, 153 residues long: Satratoxin biosynthesis SC2 cluster transcription factor SAT15 (153 aa).

The protein resides in the nucleus. Its function is as follows. Transcriptional regulator that may regulate the expression of the satratoxin biosynthesis SC2 cluster, one of the 3 clusters involved in the biosynthesis of satratoxins, trichothecene mycotoxins that are associated with human food poisonings. The chain is Satratoxin biosynthesis SC2 cluster transcription factor SAT15 from Stachybotrys chartarum (strain CBS 109288 / IBT 7711) (Toxic black mold).